A 32-amino-acid polypeptide reads, in one-letter code: Photosystem I reaction center subunit XII (32 aa).

Residues V9 to Y31 traverse the membrane as a helical segment.

The protein belongs to the PsaM family.

The protein localises to the plastid. The protein resides in the chloroplast thylakoid membrane. The chain is Photosystem I reaction center subunit XII from Chaetosphaeridium globosum (Charophycean green alga).